The sequence spans 322 residues: 4-diphosphocytidyl-2-C-methyl-D-erythritol kinase (322 aa).

Residue Lys-18 is part of the active site. Position 130–140 (130–140) interacts with ATP; that stretch reads PMGAGLGGGSS. Asp-172 is a catalytic residue.

This sequence belongs to the GHMP kinase family. IspE subfamily.

The catalysed reaction is 4-CDP-2-C-methyl-D-erythritol + ATP = 4-CDP-2-C-methyl-D-erythritol 2-phosphate + ADP + H(+). It participates in isoprenoid biosynthesis; isopentenyl diphosphate biosynthesis via DXP pathway; isopentenyl diphosphate from 1-deoxy-D-xylulose 5-phosphate: step 3/6. Its function is as follows. Catalyzes the phosphorylation of the position 2 hydroxy group of 4-diphosphocytidyl-2C-methyl-D-erythritol. The polypeptide is 4-diphosphocytidyl-2-C-methyl-D-erythritol kinase (Psychrobacter cryohalolentis (strain ATCC BAA-1226 / DSM 17306 / VKM B-2378 / K5)).